The following is a 731-amino-acid chain: 1,4-alpha-glucan branching enzyme GlgB (731 aa).

D411 acts as the Nucleophile in catalysis. The active-site Proton donor is the E464.

This sequence belongs to the glycosyl hydrolase 13 family. GlgB subfamily. Monomer.

It catalyses the reaction Transfers a segment of a (1-&gt;4)-alpha-D-glucan chain to a primary hydroxy group in a similar glucan chain.. Its pathway is glycan biosynthesis; glycogen biosynthesis. Catalyzes the formation of the alpha-1,6-glucosidic linkages in glycogen by scission of a 1,4-alpha-linked oligosaccharide from growing alpha-1,4-glucan chains and the subsequent attachment of the oligosaccharide to the alpha-1,6 position. This is 1,4-alpha-glucan branching enzyme GlgB from Mycolicibacterium paratuberculosis (strain ATCC BAA-968 / K-10) (Mycobacterium paratuberculosis).